The following is a 948-amino-acid chain: Putative JmjC domain-containing histone demethylation protein 1 (948 aa).

Residues 243-402 (VSTTKLAYYV…PQLSIYNLEL (160 aa)) form the JmjC domain. Threonine 294 is a binding site for substrate. Residues histidine 297 and glutamate 299 each contribute to the Fe cation site. Lysine 314 is a binding site for substrate.

The protein belongs to the JHDM1 histone demethylase family. Fe(2+) is required as a cofactor.

The protein resides in the nucleus. It catalyses the reaction N(6),N(6)-dimethyl-L-lysyl(36)-[histone H3] + 2 2-oxoglutarate + 2 O2 = L-lysyl(36)-[histone H3] + 2 formaldehyde + 2 succinate + 2 CO2. May be a histone demethylase that specifically demethylates 'Lys-36' of histone H3, thereby playing a central role in histone code. Represses transcriptional silencing by negatively affecting heterochromatin stability. This Schizosaccharomyces pombe (strain 972 / ATCC 24843) (Fission yeast) protein is Putative JmjC domain-containing histone demethylation protein 1 (jhd1).